The sequence spans 355 residues: Ubiquinone biosynthesis protein COQ4 homolog, mitochondrial (355 aa).

Positions 134, 135, 138, and 150 each coordinate Zn(2+).

This sequence belongs to the COQ4 family. As to quaternary structure, component of a multi-subunit COQ enzyme complex. It depends on Zn(2+) as a cofactor.

The protein resides in the mitochondrion inner membrane. The enzyme catalyses a 4-hydroxy-3-methoxy-5-(all-trans-polyprenyl)benzoate + H(+) = a 2-methoxy-6-(all-trans-polyprenyl)phenol + CO2. It functions in the pathway cofactor biosynthesis; ubiquinone biosynthesis. Functionally, lyase that catalyzes the C1-decarboxylation of 4-hydroxy-3-methoxy-5-(all-trans-polyprenyl)benzoic acid into 2-methoxy-6-(all-trans-polyprenyl)phenol during ubiquinone biosynthesis. In Plasmodium yoelii yoelii, this protein is Ubiquinone biosynthesis protein COQ4 homolog, mitochondrial.